Consider the following 384-residue polypeptide: 4-hydroxy-3-methylbut-2-en-1-yl diphosphate synthase (flavodoxin) (384 aa).

The [4Fe-4S] cluster site is built by cysteine 280, cysteine 283, cysteine 315, and glutamate 322.

Belongs to the IspG family. The cofactor is [4Fe-4S] cluster.

The catalysed reaction is (2E)-4-hydroxy-3-methylbut-2-enyl diphosphate + oxidized [flavodoxin] + H2O + 2 H(+) = 2-C-methyl-D-erythritol 2,4-cyclic diphosphate + reduced [flavodoxin]. It functions in the pathway isoprenoid biosynthesis; isopentenyl diphosphate biosynthesis via DXP pathway; isopentenyl diphosphate from 1-deoxy-D-xylulose 5-phosphate: step 5/6. Converts 2C-methyl-D-erythritol 2,4-cyclodiphosphate (ME-2,4cPP) into 1-hydroxy-2-methyl-2-(E)-butenyl 4-diphosphate. This Frankia casuarinae (strain DSM 45818 / CECT 9043 / HFP020203 / CcI3) protein is 4-hydroxy-3-methylbut-2-en-1-yl diphosphate synthase (flavodoxin).